The chain runs to 156 residues: Small ribosomal subunit protein uS7c (156 aa).

This sequence belongs to the universal ribosomal protein uS7 family. In terms of assembly, part of the 30S ribosomal subunit.

It is found in the plastid. It localises to the chloroplast. Its function is as follows. One of the primary rRNA binding proteins, it binds directly to 16S rRNA where it nucleates assembly of the head domain of the 30S subunit. In Guillardia theta (Cryptophyte), this protein is Small ribosomal subunit protein uS7c (rps7).